Here is a 450-residue protein sequence, read N- to C-terminus: MNEFQPVNRRQFLFTLGATAASAILLKGCGNPPSSSGGGTSSTTQPTAAGASDLEVKTIKLGYIPIFEAAPLIIGREKGFFAKYGLDVEVSKQASWAAARDNVILGSAGGGIDGGQWQMPMPALLTEGAISNGQKVPMYVLACLSTQGNGIAVSNQLKAQNLGLKLAPNRDFILNYPQTSGRKFKASYTFPNANQDFWIRYWFAAGGIDPDKDIELLTVPSAETLQNMRNGTIDCFSTGDPWPSRIAKDDVGYQAALTGQMWPYHPEEFLALRADWVDKHPKATLALLMGLMEAQQWCDQKANRAEMAKILSGRNFFNVPVSILQPILEGQIKVGADGKDLNNFDAGPLFWKSPRGSVSYPYKGLTLWFLVESIRWGFNKQVLPDIAAAQKLNDRVTREDLWQEAAKKLGVPAADIPTGSTRGTETFFDGITYNPDSPQAYLQSLKIKRA.

Positions 1–36 (MNEFQPVNRRQFLFTLGATAASAILLKGCGNPPSSS) form a signal peptide, tat-type signal.

This sequence belongs to the CmpA/NrtA family. As to quaternary structure, the complex is composed of two ATP-binding proteins (CmpC and CmpD), a transmembrane protein (CmpB) and a solute-binding protein (CmpA). Post-translationally, predicted to be exported by the Tat system. The position of the signal peptide cleavage has not been experimentally proven.

Its subcellular location is the cell inner membrane. Functionally, part of the ABC transporter complex CmpABCD involved in bicarbonate transport. Binds bicarbonate with high affinity. The polypeptide is Bicarbonate-binding protein CmpA (cmpA) (Synechococcus sp. (strain ATCC 27144 / PCC 6301 / SAUG 1402/1) (Anacystis nidulans)).